The sequence spans 356 residues: Phospho-N-acetylmuramoyl-pentapeptide-transferase (356 aa).

10 helical membrane passes run 27-47 (ATLM…INML), 73-93 (TMGG…WMDL), 97-117 (FVWA…LDDL), 138-158 (FLVA…WLYV), 165-185 (AIPL…GAGN), 195-215 (GLAI…AYLA), 232-252 (AGEL…FLWF), 258-278 (AVFM…AIAV), 284-304 (IVLA…IIQV), and 333-353 (KVVI…LATL).

Belongs to the glycosyltransferase 4 family. MraY subfamily. Requires Mg(2+) as cofactor.

It localises to the cell inner membrane. The catalysed reaction is UDP-N-acetyl-alpha-D-muramoyl-L-alanyl-gamma-D-glutamyl-meso-2,6-diaminopimeloyl-D-alanyl-D-alanine + di-trans,octa-cis-undecaprenyl phosphate = di-trans,octa-cis-undecaprenyl diphospho-N-acetyl-alpha-D-muramoyl-L-alanyl-D-glutamyl-meso-2,6-diaminopimeloyl-D-alanyl-D-alanine + UMP. It functions in the pathway cell wall biogenesis; peptidoglycan biosynthesis. Catalyzes the initial step of the lipid cycle reactions in the biosynthesis of the cell wall peptidoglycan: transfers peptidoglycan precursor phospho-MurNAc-pentapeptide from UDP-MurNAc-pentapeptide onto the lipid carrier undecaprenyl phosphate, yielding undecaprenyl-pyrophosphoryl-MurNAc-pentapeptide, known as lipid I. The protein is Phospho-N-acetylmuramoyl-pentapeptide-transferase of Erythrobacter litoralis (strain HTCC2594).